The sequence spans 88 residues: MISKTRKAEIIKEFGGSEANTGLAEVQIALLTEDIANMTEHLKEHKKDVPTRRTLLKKVAQRRHLLDFLIKKDVNRYKEIIAKLGLRK.

It belongs to the universal ribosomal protein uS15 family. As to quaternary structure, part of the 30S ribosomal subunit. Forms a bridge to the 50S subunit in the 70S ribosome, contacting the 23S rRNA.

One of the primary rRNA binding proteins, it binds directly to 16S rRNA where it helps nucleate assembly of the platform of the 30S subunit by binding and bridging several RNA helices of the 16S rRNA. Functionally, forms an intersubunit bridge (bridge B4) with the 23S rRNA of the 50S subunit in the ribosome. This Mesoplasma florum (strain ATCC 33453 / NBRC 100688 / NCTC 11704 / L1) (Acholeplasma florum) protein is Small ribosomal subunit protein uS15.